A 220-amino-acid polypeptide reads, in one-letter code: MKPAKSSPVQIARRGLMLVISSPSGAGKSTIARTLLETDKHIGLSVSVTTRPRRPSEVEGVHYHFKSVREFERLRDSDALLEWAEVHGNFYGTPREPVEQAMAEGRDMLFDIDWQGAQQLQEKMSADVVSIFVLPPTMTELQSRLHRRAEDSEEVIQTRLANSRAEIAHWREYDYVIVNDDLNTAFDAVQSIVKAERLRRDRRHGMFDFVRELLEETPSL.

Residues 15 to 194 (GLMLVISSPS…AFDAVQSIVK (180 aa)) form the Guanylate kinase-like domain. Position 22–29 (22–29 (SPSGAGKS)) interacts with ATP.

This sequence belongs to the guanylate kinase family.

It is found in the cytoplasm. The catalysed reaction is GMP + ATP = GDP + ADP. Essential for recycling GMP and indirectly, cGMP. The polypeptide is Guanylate kinase (Rhizobium etli (strain ATCC 51251 / DSM 11541 / JCM 21823 / NBRC 15573 / CFN 42)).